A 388-amino-acid polypeptide reads, in one-letter code: Chorismate synthase (388 aa).

NADP(+) is bound by residues Arg-39 and Arg-45. FMN is bound by residues 130 to 132 (RSS), 251 to 252 (NA), Ala-296, 311 to 315 (KPIPT), and Arg-337.

Belongs to the chorismate synthase family. As to quaternary structure, homotetramer. Requires FMNH2 as cofactor.

It catalyses the reaction 5-O-(1-carboxyvinyl)-3-phosphoshikimate = chorismate + phosphate. Its pathway is metabolic intermediate biosynthesis; chorismate biosynthesis; chorismate from D-erythrose 4-phosphate and phosphoenolpyruvate: step 7/7. Its function is as follows. Catalyzes the anti-1,4-elimination of the C-3 phosphate and the C-6 proR hydrogen from 5-enolpyruvylshikimate-3-phosphate (EPSP) to yield chorismate, which is the branch point compound that serves as the starting substrate for the three terminal pathways of aromatic amino acid biosynthesis. This reaction introduces a second double bond into the aromatic ring system. This Streptococcus equi subsp. zooepidemicus (strain MGCS10565) protein is Chorismate synthase.